Here is a 224-residue protein sequence, read N- to C-terminus: Cytidylate kinase (224 aa).

10–18 (GPSGVGKGT) contacts ATP.

It belongs to the cytidylate kinase family. Type 1 subfamily.

It is found in the cytoplasm. The enzyme catalyses CMP + ATP = CDP + ADP. It catalyses the reaction dCMP + ATP = dCDP + ADP. The protein is Cytidylate kinase of Haemophilus ducreyi (strain 35000HP / ATCC 700724).